A 335-amino-acid chain; its full sequence is Trans-3-hydroxy-L-proline dehydratase (335 aa).

C91 acts as the Proton acceptor in catalysis. Substrate-binding positions include 92 to 93 (GH) and 256 to 257 (GS).

The protein belongs to the proline racemase family. Homodimer.

The enzyme catalyses trans-3-hydroxy-L-proline = 1-pyrroline-2-carboxylate + H2O. It functions in the pathway amino-acid degradation. Catalyzes the dehydration of trans-3-hydroxy-L-proline (t3LHyp) to Delta(1)-pyrroline-2-carboxylate (Pyr2C). Together with LhpI, is involved in a t3LHyp degradation pathway to L-proline, which allows A.brasilense to grow on t3LHyp as a sole carbon source. This is Trans-3-hydroxy-L-proline dehydratase from Azospirillum brasilense.